The sequence spans 217 residues: Adenylate kinase (217 aa).

ATP is bound at residue 10 to 15; it reads GAGKGT. Residues 30 to 59 form an NMP region; that stretch reads STGDMFRAAMKNETELGLKAKSYMDAGELV. AMP contacts are provided by residues threonine 31, arginine 36, 57–59, 85–88, and glutamine 92; these read ELV and GFPR. The LID stretch occupies residues 126 to 163; the sequence is GRRVSPTSGRTYHVIFNPPKVEGICDVDGSELIQRDDD. ATP is bound by residues arginine 127 and 136–137; that span reads TY. Residues arginine 160 and arginine 171 each coordinate AMP. Position 199 (glutamine 199) interacts with ATP.

The protein belongs to the adenylate kinase family. In terms of assembly, monomer.

The protein localises to the cytoplasm. The enzyme catalyses AMP + ATP = 2 ADP. It participates in purine metabolism; AMP biosynthesis via salvage pathway; AMP from ADP: step 1/1. Catalyzes the reversible transfer of the terminal phosphate group between ATP and AMP. Plays an important role in cellular energy homeostasis and in adenine nucleotide metabolism. This chain is Adenylate kinase, found in Halalkalibacterium halodurans (strain ATCC BAA-125 / DSM 18197 / FERM 7344 / JCM 9153 / C-125) (Bacillus halodurans).